The following is a 357-amino-acid chain: Arginine kinase (357 aa).

Ala2 bears the N-acetylalanine mark. The Phosphagen kinase N-terminal domain occupies 9-91 (KLDEGFKKLE…FDPIIEDYHK (83 aa)). 64–68 (GVGVY) provides a ligand contact to L-arginine. The Phosphagen kinase C-terminal domain maps to 119-356 (FVISTRVRCG…LELIKIEKEM (238 aa)). ATP is bound by residues 122 to 126 (STRVR) and His185. Glu225 is a binding site for L-arginine. ATP is bound at residue Arg229. Position 271 (Cys271) interacts with L-arginine. ATP contacts are provided by residues 280–284 (RASVH) and 309–314 (RGTRGE). Position 314 (Glu314) interacts with L-arginine.

Belongs to the ATP:guanido phosphotransferase family.

The catalysed reaction is L-arginine + ATP = N(omega)-phospho-L-arginine + ADP + H(+). The sequence is that of Arginine kinase from Eriocheir sinensis (Chinese mitten crab).